The sequence spans 547 residues: uncharacterized protein (547 aa).

Positions 38–50 are enriched in basic and acidic residues; sequence RNLPFHREREKVE. The tract at residues 38–89 is disordered; it reads RNLPFHREREKVESNPNSSDEEDLTSTNNTRSSDNTTSDTEDDSGEDSYQVE. Residues 62–75 show a composition bias toward low complexity; that stretch reads TSTNNTRSSDNTTS. Transmembrane regions (helical) follow at residues 108-128, 148-168, 174-194, 197-217, 233-253, 265-285, 346-366, 377-397, 418-438, 445-465, 478-500, and 514-534; these read IYTLLVASFIAIVITANSSIF, LCSATFLLGFAAGSVLFAPLS, LPLYSVTLVIFVVFQIGGGCS, IWSLVIFRFFHGFFGCTPMSA, GALLVFCAAAFVGPLVGPVMG, WDFWINMIWAGLTWVIVCFTM, MYLVFINILLYICMVGYPLIF, GLAILGILVGILLGLALTPII, LFPLFFGSFFIPIALFWLGWT, WAAPMVSGIFLGWGFLYVLAV, AASALSVATFTRYAAGGGMTIVA, and SLLAFVGCGLVPIPFIFFFWG.

It belongs to the major facilitator superfamily. CAR1 family.

It localises to the membrane. This is an uncharacterized protein from Schizosaccharomyces pombe (strain 972 / ATCC 24843) (Fission yeast).